The sequence spans 419 residues: MADLQGRKVFKVFNQDFIVDERYTVTKELGQGAYGIVCAAVNNQTNEGVAIKKVTNVFSKKILAKRALREIKLLQHFRGHRNITCLYDMDIPRPDNFNETYLYEELMECDLAAIIRSGQPLTDAHFQSFIYQILCGLKYIHSANVLHRDLKPGNLLVNADCELKICDFGLARGFSIDPEENAGYMTEYVATRWYRAPEIMLSFQSYTKAIDVWSVGCILAELLGGRPFFKGRDYVDQLNQILHILGTPNEETLSRIGSPRAQEYVRNLPFMPKKPFAALFPNANPDALDLLDRMLAFDPSSRISVEEALEHPYLQIWHDASDEPDCPTTFNFDFEIVEDVGDMRKMILEEVFRFRQVVRTVAGENGGQQAGQQPGAGQVPMPSGGQGQWRTEDPRPEEYMGHNANGLEGELALGADGRR.

One can recognise a Protein kinase domain in the interval 23–314 (YTVTKELGQG…VEEALEHPYL (292 aa)). ATP-binding positions include 29-37 (LGQGAYGIV) and Lys52. Asp149 serves as the catalytic Proton acceptor.

This sequence belongs to the protein kinase superfamily. Ser/Thr protein kinase family. MAP kinase subfamily. Requires Mg(2+) as cofactor. Phosphorylated by the MAP kinase kinase mkk1.

The enzyme catalyses L-seryl-[protein] + ATP = O-phospho-L-seryl-[protein] + ADP + H(+). The catalysed reaction is L-threonyl-[protein] + ATP = O-phospho-L-threonyl-[protein] + ADP + H(+). Functionally, mitogen-activated protein kinase, part of the mkh1-mkk1-spm1 MAPK cascade that regulates vegetative growth, conidial formation, colony surface hydrophobicity, osmotic stress, cell wall integrity maintenance, carbon and nitrogen source utilization, chitin distribution, septa formation, and pathogenicity. This Cytospora mali (Apple Valsa canker fungus) protein is Mitogen-activated protein kinase spm1.